A 659-amino-acid polypeptide reads, in one-letter code: Putative oxidoreductase AegA (659 aa).

4Fe-4S ferredoxin-type domains are found at residues 3–22 (RFIM…EIAC), 47–77 (HQQQ…SHVD), 78–107 (DSIQ…IVLT), 114–147 (VKAT…LVTD), and 218–252 (DQAQ…WIEL). 20 residues coordinate [4Fe-4S] cluster: cysteine 12, cysteine 15, cysteine 18, cysteine 22, cysteine 56, cysteine 59, cysteine 64, cysteine 68, cysteine 87, cysteine 90, cysteine 93, cysteine 97, cysteine 121, cysteine 124, cysteine 133, cysteine 137, cysteine 227, cysteine 230, cysteine 236, and cysteine 240.

[4Fe-4S] cluster is required as a cofactor.

Its function is as follows. Involved in formate-dependent uric acid degradation under microaerobic and anaerobic conditions. May reduce the enzymes necessary for uric acid degradation. In Escherichia coli (strain K12), this protein is Putative oxidoreductase AegA.